The primary structure comprises 334 residues: Mitochondrial glycine transporter (334 aa).

Solcar repeat units lie at residues serine 10 to alanine 94, leucine 127 to arginine 211, and arginine 234 to arginine 318. 6 consecutive transmembrane segments (helical) span residues phenylalanine 16–glutamine 41, glycine 69–alanine 95, leucine 133–glutamate 158, glycine 186–lysine 209, valine 238–isoleucine 264, and glycine 293–leucine 311.

This sequence belongs to the mitochondrial carrier (TC 2.A.29) family. SLC25A38 subfamily.

The protein resides in the mitochondrion inner membrane. It catalyses the reaction glycine(in) = glycine(out). Mitochondrial glycine transporter that imports glycine into the mitochondrial matrix. Plays an important role in providing glycine for the first enzymatic step in heme biosynthesis, the condensation of glycine with succinyl-CoA to produce 5-aminolevulinate (ALA) in the mitochondrial matrix. The polypeptide is Mitochondrial glycine transporter (Pyricularia oryzae (strain 70-15 / ATCC MYA-4617 / FGSC 8958) (Rice blast fungus)).